The sequence spans 732 residues: MSKLKIAVSDSCPDCFTTQRECIYINESRNIDVAAIVLSLNDVTCGKLDEIDATGYGIPVFIATENQERVPAEYLPRISGVFENCESRREFYGRQLETAASHYETQLRPPFFRALVDYVNQGNSAFDCPGHQGGEFFRRHPAGNQFVEYFGEALFRADLCNADVAMGDLLIHEGAPCIAQQHAAKVFNADKTYFVLNGTSSSNKVVLNALLTPGDLVLFDRNNHKSNHHGALLQAGATPVYLETARNPYGFIGGIDAHCFEESYLRELIAEVAPQRAKEARPFRLAVIQLGTYDGTIYNARQVVDKIGHLCDYILFDSAWVGYEQFIPMMADCSPLLLDLNENDPGILVTQSVHKQQAGFSQTSQIHKKDSHIKGQQRYVPHKRMNNAFMMHASTSPFYPLFAALNINAKMHEGVSGRNMWMDCVVNGINARKLILDNCQHIRPFVPELVDGKPWQSYETAQIAVDLRFFQFVPGEHWHSFEGYAENQYFVDPCKLLLTTPGIDARNGEYEAFGVPATILANFLRENGVVPEKCDLNSILFLLTPAEDMAKLQQLVALLVRFEKLLESDAPLAEVLPSIYKQHEERYAGYTLRQLCQEMHDLYARHNVKQLQKEMFRKEHFPRVSMNPQEANYAYLRGEVELVRLPDAEGRIAAEGALPYPPGVLCVVPGEIWGGAVLRYFSALEEGINLLPGFAPELQGVYIEEHDGRKQVWCYVIKPRDAQSTLLKGEKL.

Lys355 carries the post-translational modification N6-(pyridoxal phosphate)lysine.

Belongs to the Orn/Lys/Arg decarboxylase class-I family. Pyridoxal 5'-phosphate serves as cofactor.

The enzyme catalyses L-ornithine + H(+) = putrescine + CO2. It participates in amine and polyamine biosynthesis; putrescine biosynthesis via L-ornithine pathway; putrescine from L-ornithine: step 1/1. In terms of biological role, the first enzyme leading to putrescine and thus polyamine synthesis. The protein is Inducible ornithine decarboxylase of Escherichia coli (strain K12).